We begin with the raw amino-acid sequence, 490 residues long: Aspartyl/glutamyl-tRNA(Asn/Gln) amidotransferase subunit B (490 aa).

Belongs to the GatB/GatE family. GatB subfamily. Heterotrimer of A, B and C subunits.

The enzyme catalyses L-glutamyl-tRNA(Gln) + L-glutamine + ATP + H2O = L-glutaminyl-tRNA(Gln) + L-glutamate + ADP + phosphate + H(+). It carries out the reaction L-aspartyl-tRNA(Asn) + L-glutamine + ATP + H2O = L-asparaginyl-tRNA(Asn) + L-glutamate + ADP + phosphate + 2 H(+). Functionally, allows the formation of correctly charged Asn-tRNA(Asn) or Gln-tRNA(Gln) through the transamidation of misacylated Asp-tRNA(Asn) or Glu-tRNA(Gln) in organisms which lack either or both of asparaginyl-tRNA or glutaminyl-tRNA synthetases. The reaction takes place in the presence of glutamine and ATP through an activated phospho-Asp-tRNA(Asn) or phospho-Glu-tRNA(Gln). The polypeptide is Aspartyl/glutamyl-tRNA(Asn/Gln) amidotransferase subunit B (Prochlorococcus marinus (strain AS9601)).